The following is a 163-amino-acid chain: SKP1-like protein 4 (163 aa).

An interaction with the F-box domain of F-box proteins region spans residues 105–163; it reads ILAANYLNIGGLLDLTCKAVADQMRGKTPEQMRAHFNIKNDYTPEEEAEVRNENKWAFE.

The protein belongs to the SKP1 family. In terms of assembly, part of a SCF (SKP1-cullin-F-box) protein ligase complex. Interacts with At1g56610, At1g67340, At3g62230, At3g59000, At4g27050, At1g55000, SKIP16 and SKIP32. Mostly expressed in inflorescence and siliques, and, to a lower extent, in seedlings, roots, and stems.

It localises to the nucleus. The protein operates within protein modification; protein ubiquitination. In terms of biological role, involved in ubiquitination and subsequent proteasomal degradation of target proteins. Together with CUL1, RBX1 and a F-box protein, it forms a SCF E3 ubiquitin ligase complex. The functional specificity of this complex depends on the type of F-box protein. In the SCF complex, it serves as an adapter that links the F-box protein to CUL1. In Arabidopsis thaliana (Mouse-ear cress), this protein is SKP1-like protein 4 (ASK4).